The following is a 2646-amino-acid chain: Probable inactive serine/threonine-protein kinase roco10 (2646 aa).

7 disordered regions span residues 28 to 122 (LNYS…LSGG), 138 to 168 (NIPI…KDKD), 205 to 248 (PLFI…VSPS), 281 to 457 (QQQR…VKQA), 477 to 516 (MSKL…HTSP), 605 to 656 (TSPN…PHQY), and 882 to 907 (QSSS…STPS). Over residues 46–56 (PQQNLLENDTL) the composition is skewed to polar residues. Composition is skewed to low complexity over residues 78 to 115 (IITT…TSPS), 147 to 161 (SPTS…NNNN), and 215 to 228 (SRNN…GGNK). Positions 235–248 (KISSTSAAGDVSPS) are enriched in polar residues. 2 stretches are compositionally biased toward low complexity: residues 285–297 (NGNN…NNNN) and 325–334 (NNNNNNNNNN). The span at 335–345 (KQPQHPMNGNH) shows a compositional bias: polar residues. The span at 346–394 (SPSNGTSGSLSMSGSGIDNGGNNNNNSNTHGSSSNQSSGVTSPIIQSTS) shows a compositional bias: low complexity. Polar residues-rich tracts occupy residues 402 to 416 (GLNS…SSPT) and 428 to 443 (TSAS…PLMN). Composition is skewed to low complexity over residues 444–454 (STGVSSSSSGV), 491–516 (PSSP…HTSP), 605–627 (TSPN…NSSP), 634–651 (QQQQ…NTNT), and 883–907 (SSSS…STPS). A Rho-GAP domain is found at 585 to 807 (SSISPISTAA…MFIQQADILF (223 aa)). LRR repeat units follow at residues 968 to 987 (QKLD…IKQL), 989 to 1011 (DLQE…ARLT), 1012 to 1033 (SLRT…MADF), 1040 to 1061 (NLEN…YTWL), 1062 to 1083 (KLKT…IFQI), 1085 to 1108 (TLEV…CTST), 1109 to 1131 (KLRS…INLV), 1132 to 1154 (ELQV…QKLT), 1155 to 1176 (SLTE…LLLL), 1178 to 1199 (NLKK…IHRM), 1201 to 1222 (SLIE…IVAL), 1224 to 1247 (KLNS…YIQK), 1248 to 1270 (GKEG…YRTR), 1271 to 1298 (IIML…SFSS), and 1303 to 1327 (LPSL…ILDI). Positions 1262-1474 (TNVPCYRTRI…RDIKQMIAKN (213 aa)) constitute a Roc domain. Disordered regions lie at residues 1293-1317 (KSSF…SNNS), 1651-1670 (NNNN…SRSM), and 1957-2026 (NNSS…KEKE). Low complexity predominate over residues 1651 to 1669 (NNNNSNGNNVGRGRSGSRS). Residues 1966–1975 (PIASSRSNPK) are compositionally biased toward polar residues. A compositionally biased stretch (low complexity) spans 1983-1996 (NLIQSNNNDNNNSL). The span at 1997–2026 (SKKDLKELAKQNKEKEKEKEKDKDKEKEKE) shows a compositional bias: basic and acidic residues. Residues 2049-2342 (FSICHFIKEI…PSKIISQLYT (294 aa)) enclose the Protein kinase domain. Residues 2055 to 2063 (IKEIDYREI) and K2094 contribute to the ATP site. In terms of domain architecture, RGS spans 2412 to 2536 (MVVLNNKQST…FTVPTTNKNG (125 aa)).

The protein belongs to the protein kinase superfamily. TKL Ser/Thr protein kinase family. ROCO subfamily.

The polypeptide is Probable inactive serine/threonine-protein kinase roco10 (roco10) (Dictyostelium discoideum (Social amoeba)).